A 156-amino-acid polypeptide reads, in one-letter code: MNIIEATVAAPDARVAIAIARFNNFINDSLLEGAIDALKRIGQVKDENITVVWVPGAYELPLAAQALAKTAKYDAVIALGTVIRGGTAHFEYVAGGASNGLAHVAQHSEIPVAFGVLTTESIEQAIERAGTKAGNKGAEAALTALEMINVLKAIQA.

5-amino-6-(D-ribitylamino)uracil is bound by residues Phe22, 57-59, and 81-83; these read AYE and TVI. Residue 86-87 participates in (2S)-2-hydroxy-3-oxobutyl phosphate binding; that stretch reads GT. His89 acts as the Proton donor in catalysis. Phe114 contributes to the 5-amino-6-(D-ribitylamino)uracil binding site. Residue Arg128 coordinates (2S)-2-hydroxy-3-oxobutyl phosphate.

The protein belongs to the DMRL synthase family. Forms an icosahedral capsid composed of 60 subunits, arranged as a dodecamer of pentamers.

It carries out the reaction (2S)-2-hydroxy-3-oxobutyl phosphate + 5-amino-6-(D-ribitylamino)uracil = 6,7-dimethyl-8-(1-D-ribityl)lumazine + phosphate + 2 H2O + H(+). It functions in the pathway cofactor biosynthesis; riboflavin biosynthesis; riboflavin from 2-hydroxy-3-oxobutyl phosphate and 5-amino-6-(D-ribitylamino)uracil: step 1/2. In terms of biological role, catalyzes the formation of 6,7-dimethyl-8-ribityllumazine by condensation of 5-amino-6-(D-ribitylamino)uracil with 3,4-dihydroxy-2-butanone 4-phosphate. This is the penultimate step in the biosynthesis of riboflavin. The sequence is that of 6,7-dimethyl-8-ribityllumazine synthase from Cronobacter sakazakii (strain ATCC BAA-894) (Enterobacter sakazakii).